We begin with the raw amino-acid sequence, 153 residues long: MKNLIKNKIKLSTYNITLIEHFIRFLIKGWKKKKAINLLSLSLNYIALTINKDPISTLEMAVRYTIPVYLEVTPSIITNENKTLWHKRFICKSSKVRTFQAIKWIIKAAKEKKDKSLYIHLAKEIVDASRNSGKAVKYKEQMENKLKLAQLHM.

This sequence belongs to the universal ribosomal protein uS7 family. In terms of assembly, part of the 30S ribosomal subunit.

It is found in the plastid. In terms of biological role, one of the primary rRNA binding proteins, it binds directly to 16S rRNA where it nucleates assembly of the head domain of the 30S subunit. This Helicosporidium sp. subsp. Simulium jonesii (Green alga) protein is Small ribosomal subunit protein uS7c (rps7).